A 64-amino-acid polypeptide reads, in one-letter code: DNA gyrase inhibitor YacG (64 aa).

4 residues coordinate Zn(2+): C9, C12, C28, and C32. Residues 45 to 64 form a disordered region; sequence KRIPSAGDLSDSDDWSEQQP. Acidic residues predominate over residues 54–64; it reads SDSDDWSEQQP.

The protein belongs to the DNA gyrase inhibitor YacG family. In terms of assembly, interacts with GyrB. It depends on Zn(2+) as a cofactor.

Its function is as follows. Inhibits all the catalytic activities of DNA gyrase by preventing its interaction with DNA. Acts by binding directly to the C-terminal domain of GyrB, which probably disrupts DNA binding by the gyrase. The protein is DNA gyrase inhibitor YacG of Klebsiella pneumoniae (strain 342).